The primary structure comprises 2055 residues: Citron Rho-interacting kinase (2055 aa).

M1 bears the N-acetylmethionine mark. The Protein kinase domain maps to 97–359 (FEVRSLVGCG…FEGLCCHPFF (263 aa)). Residues 103–111 (VGCGHFAEV) and K126 contribute to the ATP site. Residue D221 is the Proton acceptor of the active site. The AGC-kinase C-terminal domain occupies 360–430 (ARTDWNNIRN…SKALGYLGRS (71 aa)). Phosphoserine occurs at positions 432, 439, 479, and 581. Coiled coils occupy residues 441-1086 (AKVS…QWEA), 1091-1247 (LGDE…VLYS), and 1275-1325 (AKKK…RKAT). Positions 1132 to 1328 (LAVKEHKAEI…AAHRKATDHP (197 aa)) are interaction with Rho/Rac. Y1237 is modified (phosphotyrosine). The span at 1316–1329 (REEAAHRKATDHPH) shows a compositional bias: basic and acidic residues. Disordered regions lie at residues 1316-1336 (REEAAHRKATDHPHPSTPATA) and 1348-1377 (SPEHQPSAMSLLAPPSSRRKESSTPEEFSR). Positions 1353–1363 (PSAMSLLAPPS) are enriched in low complexity. Positions 1365–1377 (RRKESSTPEEFSR) are enriched in basic and acidic residues. A Phorbol-ester/DAG-type zinc finger spans residues 1388–1437 (PHRFNVGLNMRATKCAVCLDTVHFGRQASKCLECQVMCHPKCSTCLPATC). The 121-residue stretch at 1469–1589 (SLHLEGWMKV…WVTALESVVA (121 aa)) folds into the PH domain. Residues 1617 to 1907 (RLDMNCTLPF…RYLGPAISSG (291 aa)) enclose the CNH domain. The residue at position 1747 (K1747) is an N6-acetyllysine. The tract at residues 1932 to 2040 (SGTEQHRVPS…RGRLPAGAVR (109 aa)) is disordered. The span at 1939–1948 (VPSTSRSSPN) shows a compositional bias: polar residues. Position 1966 is a phosphoserine (S1966). Residues 1974 to 2031 (SHPREPSTPHRYRDREGRTELRRDKSPGRPLEREKSPGRMLSTRRERSPGRLFEDSSR) show a composition bias toward basic and acidic residues. Residues 1979-1984 (PSTPHR) carry the SH3-binding motif. S2021 is modified (phosphoserine). Position 2041 is a phosphothreonine (T2041).

The protein belongs to the protein kinase superfamily. AGC Ser/Thr protein kinase family. Interacts with TTC3. Homodimer. Directly interacts with KIF14 depending on the activation state (stronger interaction with the kinase-dead form). As to expression, a major signal was observed in testis and brain, but it was also detected in thymus, spleen, kidney, heart and lung.

It localises to the cytoplasm. It carries out the reaction L-seryl-[protein] + ATP = O-phospho-L-seryl-[protein] + ADP + H(+). The enzyme catalyses L-threonyl-[protein] + ATP = O-phospho-L-threonyl-[protein] + ADP + H(+). Its function is as follows. Plays a role in cytokinesis. Required for KIF14 localization to the central spindle and midbody. Probable RHO/RAC effector that binds to the GTP-bound forms of RHO and RAC1. It probably binds p21 with a tighter specificity in vivo. Displays serine/threonine protein kinase activity. Plays an important role in the regulation of cytokinesis and the development of the central nervous system. Phosphorylates MYL9/MLC2. The chain is Citron Rho-interacting kinase (Cit) from Mus musculus (Mouse).